The chain runs to 244 residues: Deoxynucleotide monophosphate kinase (244 aa).

DGMP is bound at residue lysine 10. 4 residues coordinate ATP: arginine 11, glycine 13, aspartate 15, and threonine 16. Isoleucine 36, lysine 37, arginine 70, arginine 137, glycine 144, threonine 145, valine 149, tryptophan 157, aspartate 180, arginine 182, glutamine 183, glutamate 186, and threonine 213 together coordinate dGMP.

Belongs to the dNMP kinase family. Homodimer. The cofactor is Mg(2+).

The catalysed reaction is dTMP + ATP = dTDP + ADP. It catalyses the reaction dGMP + ATP = dGDP + ADP. The enzyme catalyses 5-hydroxymethyl-dCMP + ATP = 5-hydroxymethyl-dCDP + ADP. In terms of biological role, allows the synthesis of deoxyribonucleoside triphosphates necessary for the rapid viral DNA replication. Phosphorylates dGMP, dTMP and 5-hydroxymethyl-dCMP (hmdCMP) while excluding dCMP and dAMP. The phosphorylation of 5-hydroxymethyl-dCMP represents the first step in the replacement of cytosine by hydroxymethylcytosine in new viral DNA genomes. In Escherichia phage RB69 (Bacteriophage RB69), this protein is Deoxynucleotide monophosphate kinase (1).